The sequence spans 196 residues: ATP-dependent Clp protease proteolytic subunit (196 aa).

The active-site Nucleophile is the serine 99. The active site involves histidine 124.

The protein belongs to the peptidase S14 family. In terms of assembly, fourteen ClpP subunits assemble into 2 heptameric rings which stack back to back to give a disk-like structure with a central cavity, resembling the structure of eukaryotic proteasomes.

Its subcellular location is the cytoplasm. It catalyses the reaction Hydrolysis of proteins to small peptides in the presence of ATP and magnesium. alpha-casein is the usual test substrate. In the absence of ATP, only oligopeptides shorter than five residues are hydrolyzed (such as succinyl-Leu-Tyr-|-NHMec, and Leu-Tyr-Leu-|-Tyr-Trp, in which cleavage of the -Tyr-|-Leu- and -Tyr-|-Trp bonds also occurs).. In terms of biological role, cleaves peptides in various proteins in a process that requires ATP hydrolysis. Has a chymotrypsin-like activity. Plays a major role in the degradation of misfolded proteins. The protein is ATP-dependent Clp protease proteolytic subunit of Helicobacter hepaticus (strain ATCC 51449 / 3B1).